The sequence spans 518 residues: GTPase MTG2, mitochondrial (518 aa).

A mitochondrion-targeting transit peptide spans 1–23 (MSIAWSSVFKRELRLERFLPRVY). In terms of domain architecture, Obg spans 89–339 (GNFVDVRIVK…QHFLFELKSI (251 aa)). Residues 340 to 512 (ADLGLIGLPN…LKKKMFKCAR (173 aa)) enclose the OBG-type G domain. GTP-binding positions include 346–353 (GLPNAGKS), 394–398 (DIPGI), and 460–463 (NKVD).

It belongs to the TRAFAC class OBG-HflX-like GTPase superfamily. OBG GTPase family. In terms of assembly, interacts with the mitochondrial 54S large ribosomal subunit.

It localises to the mitochondrion inner membrane. Functionally, required for mitochondrial protein synthesis. May be involved in mitochondrial ribosome biogenesis. The sequence is that of GTPase MTG2, mitochondrial (MTG2) from Saccharomyces cerevisiae (strain ATCC 204508 / S288c) (Baker's yeast).